A 170-amino-acid polypeptide reads, in one-letter code: Fimbrial protein (170 aa).

Residues 1–7 (MNTLQKG) constitute a propeptide, leader sequence. At phenylalanine 8 the chain carries N-methylphenylalanine. The helical transmembrane segment at 8–28 (FTLIELMIVIAIVGILAAVAL) threads the bilayer. Residue serine 70 is glycosylated (O-linked (Gal...) serine). At serine 100 the chain carries O-(sn-1-glycerophosphoryl)serine. A disulfide bridge links cysteine 127 with cysteine 163.

It belongs to the N-Me-Phe pilin family. In terms of assembly, the pili are polar flexible filaments of about 5.4 nanometers diameter and 2.5 micrometers average length; they consist of only a single polypeptide chain arranged in a helical configuration of five subunits per turn in the assembled pilus. In terms of processing, O-linked glycan has been reported to consist either of the Gal(alpha1-3) GlcNAc disaccharide, or the Gal(beta 1-4) Gal(alpha 1-3) 2,4-diacetamido-2,4,6-trideoxyhexose trisaccharide.

The protein resides in the fimbrium. The protein localises to the membrane. Its function is as follows. Major component of the type IV pilus (T4P) that plays a role in cellular adherence, microcolony formation as well as twitching motility. The protein is Fimbrial protein (pilE) of Neisseria meningitidis serogroup B (strain ATCC BAA-335 / MC58).